The following is a 182-amino-acid chain: ATP-dependent protease subunit HslV (182 aa).

Thr6 is an active-site residue. Residues Ala164, Cys167, and Thr170 each coordinate Na(+).

It belongs to the peptidase T1B family. HslV subfamily. In terms of assembly, a double ring-shaped homohexamer of HslV is capped on each side by a ring-shaped HslU homohexamer. The assembly of the HslU/HslV complex is dependent on binding of ATP.

The protein resides in the cytoplasm. The catalysed reaction is ATP-dependent cleavage of peptide bonds with broad specificity.. Its activity is regulated as follows. Allosterically activated by HslU binding. Functionally, protease subunit of a proteasome-like degradation complex believed to be a general protein degrading machinery. The sequence is that of ATP-dependent protease subunit HslV from Borreliella burgdorferi (strain ATCC 35210 / DSM 4680 / CIP 102532 / B31) (Borrelia burgdorferi).